Consider the following 566-residue polypeptide: Chaperone Ric-8 (566 aa).

It belongs to the synembryn family. In terms of assembly, interacts with GDP-bound G(i)-alpha protein. Does not interact with G-alpha proteins when they are in complex with subunits beta and gamma. Interacts with Frq2 in a Ca(2+)-independent manner but does not interact with Frq1.

It is found in the cytoplasm. It localises to the cell cortex. Its subcellular location is the presynapse. Functionally, chaperone that specifically binds and folds some, but not all, nascent G alpha proteins prior to G protein heterotrimer formation, promoting their stability and activity. Also acts as a guanine nucleotide exchange factor (GEF) for G alpha proteins by stimulating exchange of bound GDP for free GTP. Plays a key role in asymmetric spindle positioning, a step for asymmetric cell division that generates cell diversity during development by activating G(i) alpha protein independently of G-protein coupled receptors. Required during gastrulation and sensory organ precursor (SOP) formation. Plays a role in positively regulating synapse number and neurotransmitter release. The protein is Chaperone Ric-8 (ric8a) of Drosophila pseudoobscura pseudoobscura (Fruit fly).